The sequence spans 271 residues: Pyrroline-5-carboxylate reductase (271 aa).

Belongs to the pyrroline-5-carboxylate reductase family.

It localises to the cytoplasm. It catalyses the reaction L-proline + NADP(+) = (S)-1-pyrroline-5-carboxylate + NADPH + 2 H(+). The enzyme catalyses L-proline + NAD(+) = (S)-1-pyrroline-5-carboxylate + NADH + 2 H(+). It functions in the pathway amino-acid biosynthesis; L-proline biosynthesis; L-proline from L-glutamate 5-semialdehyde: step 1/1. Functionally, catalyzes the reduction of 1-pyrroline-5-carboxylate (PCA) to L-proline. This Staphylococcus aureus (strain COL) protein is Pyrroline-5-carboxylate reductase.